The primary structure comprises 259 residues: 4-hydroxy-tetrahydrodipicolinate reductase (259 aa).

NAD(+) is bound by residues 8-13, 93-95, and 119-122; these read GFKGRM, GTT, and APNF. The active-site Proton donor/acceptor is the His-149. His-150 contacts (S)-2,3,4,5-tetrahydrodipicolinate. Lys-153 functions as the Proton donor in the catalytic mechanism. (S)-2,3,4,5-tetrahydrodipicolinate is bound at residue 159–160; sequence GT.

This sequence belongs to the DapB family.

The protein localises to the cytoplasm. The enzyme catalyses (S)-2,3,4,5-tetrahydrodipicolinate + NAD(+) + H2O = (2S,4S)-4-hydroxy-2,3,4,5-tetrahydrodipicolinate + NADH + H(+). It catalyses the reaction (S)-2,3,4,5-tetrahydrodipicolinate + NADP(+) + H2O = (2S,4S)-4-hydroxy-2,3,4,5-tetrahydrodipicolinate + NADPH + H(+). Its pathway is amino-acid biosynthesis; L-lysine biosynthesis via DAP pathway; (S)-tetrahydrodipicolinate from L-aspartate: step 4/4. Its function is as follows. Catalyzes the conversion of 4-hydroxy-tetrahydrodipicolinate (HTPA) to tetrahydrodipicolinate. This is 4-hydroxy-tetrahydrodipicolinate reductase from Enterococcus faecalis (strain ATCC 700802 / V583).